The following is a 456-amino-acid chain: 26S proteasome non-ATPase regulatory subunit 12 (456 aa).

Ala-2 carries the N-acetylalanine modification. Lys-92 is covalently cross-linked (Glycyl lysine isopeptide (Lys-Gly) (interchain with G-Cter in SUMO1); alternate). A Glycyl lysine isopeptide (Lys-Gly) (interchain with G-Cter in SUMO2); alternate cross-link involves residue Lys-92. An N6-acetyllysine mark is found at Lys-221 and Lys-368. Positions 242 to 420 (SICKHYRAIY…GIINFQRPKD (179 aa)) constitute a PCI domain.

Belongs to the proteasome subunit p55 family. Component of the 19S proteasome regulatory particle complex. The 26S proteasome consists of a 20S core particle (CP) and two 19S regulatory subunits (RP). The regulatory particle is made of a lid composed of 9 subunits including PSMD12, a base containing 6 ATPases and few additional components. Interacts with ERCC6.

Component of the 26S proteasome, a multiprotein complex involved in the ATP-dependent degradation of ubiquitinated proteins. This complex plays a key role in the maintenance of protein homeostasis by removing misfolded or damaged proteins, which could impair cellular functions, and by removing proteins whose functions are no longer required. Therefore, the proteasome participates in numerous cellular processes, including cell cycle progression, apoptosis, or DNA damage repair. The chain is 26S proteasome non-ATPase regulatory subunit 12 (PSMD12) from Homo sapiens (Human).